A 740-amino-acid polypeptide reads, in one-letter code: Probable type IV piliation system protein DR_0774 (740 aa).

The N-terminal stretch at 1–20 (MNKRHALLLTAVLGMATAYA) is a signal peptide.

This sequence belongs to the bacterial secretin family.

It is found in the cell envelope. In terms of biological role, could be part of the type IV piliation system (T4P). May contribute at the cohesion between the S-layer and the outer membrane by forming oligomers. Could also be the main channel through which trafficking is managed. This Deinococcus radiodurans (strain ATCC 13939 / DSM 20539 / JCM 16871 / CCUG 27074 / LMG 4051 / NBRC 15346 / NCIMB 9279 / VKM B-1422 / R1) protein is Probable type IV piliation system protein DR_0774.